A 343-amino-acid polypeptide reads, in one-letter code: Replication initiation protein (343 aa).

Positions 42–61 (ERKRTKRRRGEHSTKPKCEN) are disordered.

Its function is as follows. Probably functions as an initiator for the IncI1 ColIb-P9 replicon. This is Replication initiation protein (repZ) from Escherichia coli.